We begin with the raw amino-acid sequence, 49 residues long: Large ribosomal subunit protein bL33B (49 aa).

The protein belongs to the bacterial ribosomal protein bL33 family.

The polypeptide is Large ribosomal subunit protein bL33B (Geobacillus kaustophilus (strain HTA426)).